The following is a 488-amino-acid chain: Probable Xaa-Pro aminopeptidase ATEG_00858 (488 aa).

Mn(2+) contacts are provided by aspartate 273, aspartate 284, glutamate 417, and glutamate 456.

Belongs to the peptidase M24B family. Mn(2+) serves as cofactor.

It catalyses the reaction Release of any N-terminal amino acid, including proline, that is linked to proline, even from a dipeptide or tripeptide.. Catalyzes the removal of a penultimate prolyl residue from the N-termini of peptides. This is Probable Xaa-Pro aminopeptidase ATEG_00858 from Aspergillus terreus (strain NIH 2624 / FGSC A1156).